The primary structure comprises 278 residues: 4-hydroxy-3-methylbut-2-enyl diphosphate reductase (278 aa).

Residue C12 coordinates [4Fe-4S] cluster. The (2E)-4-hydroxy-3-methylbut-2-enyl diphosphate site is built by H36 and H70. Residues H36 and H70 each contribute to the dimethylallyl diphosphate site. The isopentenyl diphosphate site is built by H36 and H70. C92 lines the [4Fe-4S] cluster pocket. H120 provides a ligand contact to (2E)-4-hydroxy-3-methylbut-2-enyl diphosphate. Position 120 (H120) interacts with dimethylallyl diphosphate. Isopentenyl diphosphate is bound at residue H120. E122 (proton donor) is an active-site residue. T158 is a (2E)-4-hydroxy-3-methylbut-2-enyl diphosphate binding site. Residue C186 coordinates [4Fe-4S] cluster. Positions 214, 216, and 258 each coordinate (2E)-4-hydroxy-3-methylbut-2-enyl diphosphate. Dimethylallyl diphosphate contacts are provided by S214, N216, and S258. Isopentenyl diphosphate is bound by residues S214, N216, and S258.

Belongs to the IspH family. [4Fe-4S] cluster serves as cofactor.

It carries out the reaction isopentenyl diphosphate + 2 oxidized [2Fe-2S]-[ferredoxin] + H2O = (2E)-4-hydroxy-3-methylbut-2-enyl diphosphate + 2 reduced [2Fe-2S]-[ferredoxin] + 2 H(+). It catalyses the reaction dimethylallyl diphosphate + 2 oxidized [2Fe-2S]-[ferredoxin] + H2O = (2E)-4-hydroxy-3-methylbut-2-enyl diphosphate + 2 reduced [2Fe-2S]-[ferredoxin] + 2 H(+). The protein operates within isoprenoid biosynthesis; dimethylallyl diphosphate biosynthesis; dimethylallyl diphosphate from (2E)-4-hydroxy-3-methylbutenyl diphosphate: step 1/1. It functions in the pathway isoprenoid biosynthesis; isopentenyl diphosphate biosynthesis via DXP pathway; isopentenyl diphosphate from 1-deoxy-D-xylulose 5-phosphate: step 6/6. In terms of biological role, catalyzes the conversion of 1-hydroxy-2-methyl-2-(E)-butenyl 4-diphosphate (HMBPP) into a mixture of isopentenyl diphosphate (IPP) and dimethylallyl diphosphate (DMAPP). Acts in the terminal step of the DOXP/MEP pathway for isoprenoid precursor biosynthesis. The polypeptide is 4-hydroxy-3-methylbut-2-enyl diphosphate reductase (Campylobacter lari (strain RM2100 / D67 / ATCC BAA-1060)).